Reading from the N-terminus, the 126-residue chain is Holo-[acyl-carrier-protein] synthase (126 aa).

Asp-9 and Glu-58 together coordinate Mg(2+).

This sequence belongs to the P-Pant transferase superfamily. AcpS family. Requires Mg(2+) as cofactor.

The protein resides in the cytoplasm. It carries out the reaction apo-[ACP] + CoA = holo-[ACP] + adenosine 3',5'-bisphosphate + H(+). In terms of biological role, transfers the 4'-phosphopantetheine moiety from coenzyme A to a Ser of acyl-carrier-protein. In Pectobacterium atrosepticum (strain SCRI 1043 / ATCC BAA-672) (Erwinia carotovora subsp. atroseptica), this protein is Holo-[acyl-carrier-protein] synthase.